A 302-amino-acid polypeptide reads, in one-letter code: Bifunctional ligase/repressor BirA (302 aa).

Residues Gln14 to Gln33 constitute a DNA-binding region (H-T-H motif). One can recognise a BPL/LPL catalytic domain in the interval Gln62–Glu236. Residues Ser80–Asn82, Gln103, Arg107–Arg109, and Lys167 contribute to the biotin site.

Belongs to the biotin--protein ligase family.

The enzyme catalyses biotin + L-lysyl-[protein] + ATP = N(6)-biotinyl-L-lysyl-[protein] + AMP + diphosphate + H(+). Functionally, acts both as a biotin--[acetyl-CoA-carboxylase] ligase and a biotin-operon repressor. In the presence of ATP, BirA activates biotin to form the BirA-biotinyl-5'-adenylate (BirA-bio-5'-AMP or holoBirA) complex. HoloBirA can either transfer the biotinyl moiety to the biotin carboxyl carrier protein (BCCP) subunit of acetyl-CoA carboxylase, or bind to the biotin operator site and inhibit transcription of the operon. The protein is Bifunctional ligase/repressor BirA of Haemophilus influenzae (strain ATCC 51907 / DSM 11121 / KW20 / Rd).